Reading from the N-terminus, the 189-residue chain is Ribosome maturation factor RimM (189 aa).

One can recognise a PRC barrel domain in the interval Glu95–Leu177.

The protein belongs to the RimM family. As to quaternary structure, binds ribosomal protein uS19.

The protein localises to the cytoplasm. Its function is as follows. An accessory protein needed during the final step in the assembly of 30S ribosomal subunit, possibly for assembly of the head region. Essential for efficient processing of 16S rRNA. May be needed both before and after RbfA during the maturation of 16S rRNA. It has affinity for free ribosomal 30S subunits but not for 70S ribosomes. In Rhizobium leguminosarum bv. trifolii (strain WSM2304), this protein is Ribosome maturation factor RimM.